The primary structure comprises 380 residues: Cytochrome b (380 aa).

4 helical membrane-spanning segments follow: residues Phe-34–Thr-54, Trp-78–Ile-99, Trp-114–Leu-134, and Phe-179–Thr-199. Heme b contacts are provided by His-84 and His-98. The heme b site is built by His-183 and His-197. His-202 lines the a ubiquinone pocket. 4 helical membrane passes run Leu-227–Ser-247, Leu-289–His-309, Leu-321–Ser-341, and Phe-348–Pro-368.

This sequence belongs to the cytochrome b family. In terms of assembly, the cytochrome bc1 complex contains 11 subunits: 3 respiratory subunits (MT-CYB, CYC1 and UQCRFS1), 2 core proteins (UQCRC1 and UQCRC2) and 6 low-molecular weight proteins (UQCRH/QCR6, UQCRB/QCR7, UQCRQ/QCR8, UQCR10/QCR9, UQCR11/QCR10 and a cleavage product of UQCRFS1). This cytochrome bc1 complex then forms a dimer. Heme b is required as a cofactor.

Its subcellular location is the mitochondrion inner membrane. Functionally, component of the ubiquinol-cytochrome c reductase complex (complex III or cytochrome b-c1 complex) that is part of the mitochondrial respiratory chain. The b-c1 complex mediates electron transfer from ubiquinol to cytochrome c. Contributes to the generation of a proton gradient across the mitochondrial membrane that is then used for ATP synthesis. This Uria lomvia (Thick-billed murre) protein is Cytochrome b (MT-CYB).